The primary structure comprises 64 residues: Translational regulator CsrA (64 aa).

This sequence belongs to the CsrA/RsmA family. As to quaternary structure, homodimer; the beta-strands of each monomer intercalate to form a hydrophobic core, while the alpha-helices form wings that extend away from the core.

It is found in the cytoplasm. Functionally, a key translational regulator that binds mRNA to regulate translation initiation and/or mRNA stability. Mediates global changes in gene expression, shifting from rapid growth to stress survival by linking envelope stress, the stringent response and the catabolite repression systems. Usually binds in the 5'-UTR; binding at or near the Shine-Dalgarno sequence prevents ribosome-binding, repressing translation, binding elsewhere in the 5'-UTR can activate translation and/or stabilize the mRNA. Its function is antagonized by small RNA(s). The sequence is that of Translational regulator CsrA from Methylococcus capsulatus (strain ATCC 33009 / NCIMB 11132 / Bath).